The primary structure comprises 265 residues: Transcription factor LBX1b (265 aa).

The homeobox DNA-binding region spans 121 to 180 (RRKSRTAFTNHQLYELEKRFLHQKYLSPADRDQIAHQLGLTNAQVITWFQNRRAKLKRDL).

The protein resides in the nucleus. Functionally, transcription factor required for the development of hypaxial muscles. This is Transcription factor LBX1b from Danio rerio (Zebrafish).